The sequence spans 527 residues: Bifunctional purine biosynthesis protein PurH (527 aa).

One can recognise an MGS-like domain in the interval 1–149; sequence MASDFLPVRR…KNFARVAVAA (149 aa).

This sequence belongs to the PurH family.

The catalysed reaction is (6R)-10-formyltetrahydrofolate + 5-amino-1-(5-phospho-beta-D-ribosyl)imidazole-4-carboxamide = 5-formamido-1-(5-phospho-D-ribosyl)imidazole-4-carboxamide + (6S)-5,6,7,8-tetrahydrofolate. It carries out the reaction IMP + H2O = 5-formamido-1-(5-phospho-D-ribosyl)imidazole-4-carboxamide. It functions in the pathway purine metabolism; IMP biosynthesis via de novo pathway; 5-formamido-1-(5-phospho-D-ribosyl)imidazole-4-carboxamide from 5-amino-1-(5-phospho-D-ribosyl)imidazole-4-carboxamide (10-formyl THF route): step 1/1. Its pathway is purine metabolism; IMP biosynthesis via de novo pathway; IMP from 5-formamido-1-(5-phospho-D-ribosyl)imidazole-4-carboxamide: step 1/1. The protein is Bifunctional purine biosynthesis protein PurH of Xanthomonas axonopodis pv. citri (strain 306).